We begin with the raw amino-acid sequence, 404 residues long: MTKLTVKDLDLKGKKVLMRVDFNVPIKDGVIGNDNRVVAALPTIKYVLEQGGKAILFSHLGRIKKAEDKPGLSLAPVAKHLSDLLNQEVVFPGKTEGKELEDAIDKLKDGQVLMVENTRYEDVDANGEYVKRESGNDPELGKYWADLGDDLFVNDAFGTAHRSHASNVGIASNVSKTAAGFLMEKEIKYLDEAVNNPKRPFVAVLGGAKVSDKIEVIKNLLSKADKVIVGGGMSYTFSNAKGVKIGNSLFEADKVSLAKEIMKEAGDKLVLPEDSVAAESFANDVPTKVFENGIPDGWMGLDIGPKTIEKFKNTLKGAKTVVWNGPMGVFEMSNFANGTLELGKFIGSLTSEGAATIVGGGDSTAAVSQLGIADQFTHISTGGGASLEYLEGKTLPGIAAISDK.

Residues 21-23 (DFN), R36, 59-62 (HLGR), R119, and R162 contribute to the substrate site. Residues K213, G300, E331, and 360 to 363 (GGDS) each bind ATP.

This sequence belongs to the phosphoglycerate kinase family. In terms of assembly, monomer.

Its subcellular location is the cytoplasm. It carries out the reaction (2R)-3-phosphoglycerate + ATP = (2R)-3-phospho-glyceroyl phosphate + ADP. The protein operates within carbohydrate degradation; glycolysis; pyruvate from D-glyceraldehyde 3-phosphate: step 2/5. In Oenococcus oeni (strain ATCC BAA-331 / PSU-1), this protein is Phosphoglycerate kinase.